The sequence spans 1219 residues: ATP-dependent helicase/nuclease subunit A (1219 aa).

One can recognise a UvrD-like helicase ATP-binding domain in the interval 12 to 477 (TRWTDNQWKS…IDLSQNFRSR (466 aa)). 33 to 40 (AAAGSGKT) lines the ATP pocket. Residues 478-786 (EEVLTTTNYL…RMMTIHSSKG (309 aa)) enclose the UvrD-like helicase C-terminal domain. The segment at 997–1016 (PSKQSVSELKRQHETEQSDT) is disordered. Residues 1004–1016 (ELKRQHETEQSDT) show a composition bias toward basic and acidic residues.

Belongs to the helicase family. AddA subfamily. Heterodimer of AddA and AddB/RexB. Mg(2+) is required as a cofactor.

It catalyses the reaction Couples ATP hydrolysis with the unwinding of duplex DNA by translocating in the 3'-5' direction.. The catalysed reaction is ATP + H2O = ADP + phosphate + H(+). The heterodimer acts as both an ATP-dependent DNA helicase and an ATP-dependent, dual-direction single-stranded exonuclease. Recognizes the chi site generating a DNA molecule suitable for the initiation of homologous recombination. The AddA nuclease domain is required for chi fragment generation; this subunit has the helicase and 3' -&gt; 5' nuclease activities. The chain is ATP-dependent helicase/nuclease subunit A from Staphylococcus saprophyticus subsp. saprophyticus (strain ATCC 15305 / DSM 20229 / NCIMB 8711 / NCTC 7292 / S-41).